Here is a 408-residue protein sequence, read N- to C-terminus: LL-diaminopimelate aminotransferase (408 aa).

2 residues coordinate substrate: tyrosine 15 and glycine 42. Residues tyrosine 72, 108–109 (SK), tyrosine 132, asparagine 187, tyrosine 218, and 246–248 (SFS) each bind pyridoxal 5'-phosphate. Positions 109, 132, and 187 each coordinate substrate. N6-(pyridoxal phosphate)lysine is present on lysine 249. Residues arginine 257 and asparagine 292 each coordinate pyridoxal 5'-phosphate. The substrate site is built by asparagine 292 and arginine 388.

The protein belongs to the class-I pyridoxal-phosphate-dependent aminotransferase family. LL-diaminopimelate aminotransferase subfamily. In terms of assembly, homodimer. It depends on pyridoxal 5'-phosphate as a cofactor.

It carries out the reaction (2S,6S)-2,6-diaminopimelate + 2-oxoglutarate = (S)-2,3,4,5-tetrahydrodipicolinate + L-glutamate + H2O + H(+). The protein operates within amino-acid biosynthesis; L-lysine biosynthesis via DAP pathway; LL-2,6-diaminopimelate from (S)-tetrahydrodipicolinate (aminotransferase route): step 1/1. Involved in the synthesis of meso-diaminopimelate (m-DAP or DL-DAP), required for both lysine and peptidoglycan biosynthesis. Catalyzes the direct conversion of tetrahydrodipicolinate to LL-diaminopimelate. The protein is LL-diaminopimelate aminotransferase of Leptospira borgpetersenii serovar Hardjo-bovis (strain L550).